Reading from the N-terminus, the 508-residue chain is Gasdermin-C (508 aa).

Residues 1–257 (MPSMLERISK…VGYCAARSEG (257 aa)) are triggers pyroptosis.

This sequence belongs to the gasdermin family. As to quaternary structure, homooligomer; homooligomeric ring-shaped pore complex containing 27-28 subunits when inserted in the membrane. In terms of processing, cleavage by CASP8 relieves autoinhibition by releasing the N-terminal moiety (Gasdermin-C, N-terminal) that initiates pyroptosis. The cleavage site is unclear. According to a publication, it takes place after Asp-240 in response to alpha-ketoglutarate. Another paper reports cleavage by CASP8 after Asp-365. Palmitoylated. As to expression, expressed mainly in trachea and spleen. In the esophagus, expressed in differentiating cells and probably in differentiated cells. Also detected in gastric epithelium.

It is found in the cytoplasm. It localises to the cytosol. Its subcellular location is the cell membrane. With respect to regulation, the full-length protein before cleavage is inactive: intramolecular interactions between N- and C-terminal domains mediate autoinhibition in the absence of activation signal. The intrinsic pyroptosis-inducing activity is carried by the released N-terminal moiety (Gasdermin-C, N-terminal) following cleavage by caspase CASP8. Functionally, this form constitutes the precursor of the pore-forming protein: upon cleavage, the released N-terminal moiety (Gasdermin-C, N-terminal) binds to membranes and forms pores, triggering pyroptosis. In terms of biological role, pore-forming protein that causes membrane permeabilization and pyroptosis. Produced by the cleavage of gasdermin-C by caspase CASP8 in response to death signals. After cleavage, moves to the plasma membrane where it strongly binds to membrane inner leaflet lipids. Homooligomerizes within the membrane and forms pores of 10-15 nanometers (nm) of inner diameter, triggering pyroptosis. The chain is Gasdermin-C from Homo sapiens (Human).